Consider the following 175-residue polypeptide: Interferon a3 (175 aa).

The signal sequence occupies residues 1-23 (MYTMQSWSCIFLIICSMQSVCHC). Cysteines 24 and 120 form a disulfide.

This sequence belongs to the alpha/beta interferon family. In terms of tissue distribution, isoform 1 and isoform 2 are expressed in several tissues, including gill, spleen, intestine, kidney and skin.

It is found in the secreted. It localises to the cytoplasm. The protein localises to the cytosol. In terms of biological role, key player in antiviral response. Induces expression of TLRs, including that of TLR3, TLR9 and TLR8a1, and that of cytosolic pattern recognition receptors, including RIGI, IFIH1/MDA5 and DHX58/LGP2. Also induces MX1 and its own expression. In the presence of intracellular IFNAR2 (iIFNAR2) and IFNAR1B, intracellular isoform 3 may mediate STAT1 and STAT2 phosphorylation and induction of EIF2AK2, MX1 and RSAD2. The protein is Interferon a3 of Oncorhynchus mykiss (Rainbow trout).